Reading from the N-terminus, the 527-residue chain is Laccase-5 (527 aa).

The first 23 residues, 1–23, serve as a signal peptide directing secretion; sequence MGKFHSFVNVVALSLSLSGRVFG. The Plastocyanin-like 1 domain maps to 25–150; sequence IGPVTDLTIS…DGLRGPLVVY (126 aa). Residues asparagine 74 and asparagine 77 are each glycosylated (N-linked (GlcNAc...) asparagine). Cu cation contacts are provided by histidine 87, histidine 89, histidine 132, and histidine 134. Disulfide bonds link cysteine 108–cysteine 516 and cysteine 140–cysteine 230. 10 N-linked (GlcNAc...) asparagine glycosylation sites follow: asparagine 156, asparagine 209, asparagine 233, asparagine 242, asparagine 276, asparagine 317, asparagine 358, asparagine 366, asparagine 393, and asparagine 402. The Plastocyanin-like 2 domain maps to 162–306; it reads VDDDTTVITL…GGVNSAILRY (145 aa). The 126-residue stretch at 373–498 folds into the Plastocyanin-like 3 domain; it reads TVPVLLQILS…AGFAIVFAED (126 aa). Residues histidine 425, histidine 428, histidine 430, histidine 480, cysteine 481, histidine 482, and histidine 486 each coordinate Cu cation.

Belongs to the multicopper oxidase family. Cu cation is required as a cofactor.

It localises to the secreted. It catalyses the reaction 4 hydroquinone + O2 = 4 benzosemiquinone + 2 H2O. In terms of biological role, lignin degradation and detoxification of lignin-derived products. This is Laccase-5 (LCC5) from Trametes versicolor (White-rot fungus).